A 150-amino-acid polypeptide reads, in one-letter code: Large ribosomal subunit protein bL9 (150 aa).

It belongs to the bacterial ribosomal protein bL9 family.

Binds to the 23S rRNA. The polypeptide is Large ribosomal subunit protein bL9 (Shewanella denitrificans (strain OS217 / ATCC BAA-1090 / DSM 15013)).